Here is a 296-residue protein sequence, read N- to C-terminus: Heme oxygenase 1 (296 aa).

The Cytoplasmic portion of the chain corresponds to 1–273 (METSQPHNAE…RMQADMLTTS (273 aa)). The heme b site is built by K21, H28, Y137, and R186. The interval 231–264 (GHAVQPKAELRTRSVNKSHENSPAAGKESERTSR) is disordered. Over residues 238 to 250 (AELRTRSVNKSHE) the composition is skewed to basic and acidic residues. A helical; Anchor for type IV membrane protein transmembrane segment spans residues 274–296 (PLVRWLLALGFIATTVAVGLFAM).

It belongs to the heme oxygenase family. Homodimer and higher order homooligomer. Oligomerization is crucial for its stability and function in the endoplasmic reticulum. A soluble form arises by proteolytic removal of the membrane anchor.

The protein localises to the endoplasmic reticulum membrane. It catalyses the reaction heme b + 3 reduced [NADPH--hemoprotein reductase] + 3 O2 = biliverdin IXalpha + CO + Fe(2+) + 3 oxidized [NADPH--hemoprotein reductase] + 3 H2O + H(+). Its activity is regulated as follows. Inhibited by metalloporphyrins in the following order of decreasing potency: tin mesoporphyrin &gt; tin protoporphyrin &gt; zinc protoporphyrin &gt; manganese protoporphyrin &gt; cobalt protoporphyrin. Its function is as follows. Catalyzes the oxidative cleavage of heme at the alpha-methene bridge carbon, released as carbon monoxide (CO), to generate biliverdin IXalpha, while releasing the central heme iron chelate as ferrous iron. Affords protection against programmed cell death and this cytoprotective effect relies on its ability to catabolize free heme and prevent it from sensitizing cells to undergo apoptosis. Catalyzes the oxidative cleavage of heme at the alpha-methene bridge carbon, released as carbon monoxide (CO), to generate biliverdin IXalpha, while releasing the central heme iron chelate as ferrous iron. This chain is Heme oxygenase 1 (HMOX1), found in Gallus gallus (Chicken).